The following is a 492-amino-acid chain: Protein nucleotidyltransferase YdiU (492 aa).

The ATP site is built by glycine 91, glycine 93, arginine 94, lysine 114, aspartate 126, glycine 127, arginine 180, and arginine 187. Aspartate 256 functions as the Proton acceptor in the catalytic mechanism. Positions 257 and 266 each coordinate Mg(2+). Aspartate 266 contacts ATP.

This sequence belongs to the SELO family. Requires Mg(2+) as cofactor. Mn(2+) is required as a cofactor.

It catalyses the reaction L-seryl-[protein] + ATP = 3-O-(5'-adenylyl)-L-seryl-[protein] + diphosphate. The enzyme catalyses L-threonyl-[protein] + ATP = 3-O-(5'-adenylyl)-L-threonyl-[protein] + diphosphate. The catalysed reaction is L-tyrosyl-[protein] + ATP = O-(5'-adenylyl)-L-tyrosyl-[protein] + diphosphate. It carries out the reaction L-histidyl-[protein] + UTP = N(tele)-(5'-uridylyl)-L-histidyl-[protein] + diphosphate. It catalyses the reaction L-seryl-[protein] + UTP = O-(5'-uridylyl)-L-seryl-[protein] + diphosphate. The enzyme catalyses L-tyrosyl-[protein] + UTP = O-(5'-uridylyl)-L-tyrosyl-[protein] + diphosphate. Its function is as follows. Nucleotidyltransferase involved in the post-translational modification of proteins. It can catalyze the addition of adenosine monophosphate (AMP) or uridine monophosphate (UMP) to a protein, resulting in modifications known as AMPylation and UMPylation. This chain is Protein nucleotidyltransferase YdiU, found in Synechococcus sp. (strain ATCC 27144 / PCC 6301 / SAUG 1402/1) (Anacystis nidulans).